We begin with the raw amino-acid sequence, 711 residues long: Polyribonucleotide nucleotidyltransferase (711 aa).

Mg(2+)-binding residues include D486 and D492. Residues 553–612 (PRIHTIKINPDKIKDVIGKGGSVIRALTEETGTTIEIEDDGTVKIAATDGEKAKHAIRRI) enclose the KH domain. One can recognise an S1 motif domain in the interval 622–690 (GRVYTGKVTR…RQGRIRLSIK (69 aa)). A disordered region spans residues 689-711 (IKEATEQSQPAAAPEAPAAEQGE). The segment covering 694-711 (EQSQPAAAPEAPAAEQGE) has biased composition (low complexity).

It belongs to the polyribonucleotide nucleotidyltransferase family. In terms of assembly, component of the RNA degradosome, which is a multiprotein complex involved in RNA processing and mRNA degradation. Requires Mg(2+) as cofactor.

It localises to the cytoplasm. The enzyme catalyses RNA(n+1) + phosphate = RNA(n) + a ribonucleoside 5'-diphosphate. Its function is as follows. Involved in mRNA degradation. Catalyzes the phosphorolysis of single-stranded polyribonucleotides processively in the 3'- to 5'-direction. The sequence is that of Polyribonucleotide nucleotidyltransferase from Escherichia coli (strain SE11).